A 256-amino-acid polypeptide reads, in one-letter code: Protein FixA (256 aa).

This sequence belongs to the ETF beta-subunit/FixA family. Heterodimer of FixA and FixB.

The protein operates within amine and polyamine metabolism; carnitine metabolism. Its function is as follows. Required for anaerobic carnitine reduction. May bring reductant to CaiA. The protein is Protein FixA of Escherichia coli O6:H1 (strain CFT073 / ATCC 700928 / UPEC).